The sequence spans 251 residues: Fibroblast growth factor 23 (251 aa).

A signal peptide spans 1 to 24; it reads MLGTCLRLLVGVLCTVCSLGTARA. Cys-95 and Cys-113 are joined by a disulfide. O-linked (GalNAc) threonine glycosylation is found at Thr-171 and Thr-178. The disordered stretch occupies residues 175–251; the sequence is RRHTRSAEDP…DRCRPFPRFV (77 aa). Residues 179 to 189 show a composition bias toward basic and acidic residues; the sequence is RSAEDPPERDP. A Phosphoserine; by FAM20C modification is found at Ser-180.

Belongs to the heparin-binding growth factors family. As to quaternary structure, interacts with FGFR1. Interacts with FGFR2, FGFR3 and FGFR4. Affinity between fibroblast growth factors (FGFs) and their receptors is increased by KL and heparan sulfate glycosaminoglycans that function as coreceptors. Post-translationally, following secretion this protein is inactivated by cleavage into a N-terminal fragment and a C-terminal fragment. The processing is effected by proprotein convertases. In terms of processing, O-glycosylated at Thr-171 and Thr-178 by GALNT3 and glycosylation of Thr-178 requires previous glycosylation at Thr171. Glycosylation is necessary for secretion; it blocks processing by proprotein convertases when the O-glycan is alpha 2,6-sialylated. Competition between proprotein convertase cleavage and block of cleavage by O-glycosylation determines the level of secreted active FGF23. Phosphorylation at Ser-180 mediated by FAM20C slows down glycosylation at Thr-178 notably. In terms of tissue distribution, mainly expressed in the brain and thymus at low levels. In brain; preferentially expressed in the ventrolateral thalamic nucleus.

It localises to the secreted. Regulator of phosphate homeostasis. Inhibits renal tubular phosphate transport by reducing SLC34A1 levels. Acts directly on the parathyroid to decrease PTH secretion. Regulator of vitamin-D metabolism. Negatively regulates osteoblasts differentiation and matrix mineralization. Up-regulates EGR1 expression in the presence of KL. The protein is Fibroblast growth factor 23 (Fgf23) of Mus musculus (Mouse).